A 134-amino-acid polypeptide reads, in one-letter code: ATP synthase epsilon chain (134 aa).

The protein belongs to the ATPase epsilon chain family. As to quaternary structure, F-type ATPases have 2 components, CF(1) - the catalytic core - and CF(0) - the membrane proton channel. CF(1) has five subunits: alpha(3), beta(3), gamma(1), delta(1), epsilon(1). CF(0) has three main subunits: a, b and c.

It localises to the cell membrane. Its function is as follows. Produces ATP from ADP in the presence of a proton gradient across the membrane. This Listeria welshimeri serovar 6b (strain ATCC 35897 / DSM 20650 / CCUG 15529 / CIP 8149 / NCTC 11857 / SLCC 5334 / V8) protein is ATP synthase epsilon chain.